The primary structure comprises 245 residues: Probable phosphatase Spro_1934 (245 aa).

9 residues coordinate Zn(2+): His-7, His-9, His-15, His-40, Glu-73, His-101, His-131, Asp-192, and His-194.

The protein belongs to the PHP family. As to quaternary structure, homotrimer. It depends on Zn(2+) as a cofactor.

The chain is Probable phosphatase Spro_1934 from Serratia proteamaculans (strain 568).